Reading from the N-terminus, the 106-residue chain is Prothymosin alpha-B (106 aa).

A compositionally biased stretch (basic and acidic residues) spans 1–39; it reads MADAKVDSATEISAKDLKEKKLIEEKENGKDATNGKENE. The segment at 1–106 is disordered; that stretch reads MADAKVDSAT…DVDPKKQKVN (106 aa). At serine 8 the chain carries Phosphoserine. A Phosphothreonine modification is found at threonine 10. Composition is skewed to acidic residues over residues 40–76 and 85–98; these read ENGE…DEDL and DDDE…EDDV.

The protein belongs to the pro/parathymosin family. In terms of tissue distribution, uniformly expressed in all embryonic cells at 4 and 8 hpf. At the 20-somite stage (18 hpf), ubiquitously expressed in the developing nervous system, in the tail bud and in the pronephric ducts. Also expressed in some placodes, including the anterior lateral line placode, otic vesicle and olfactory placode. At 27 hpf, strong expression persists in the central nervous system and the olfactory placode. Expressed strongly in the eyes and the pectoral fin buds. In the tail region, expressed in the spinal cord, in the posterior lateral line precursors, and persists in the pronephric ducts. At 48 hpf, expressed in all head territories including the developing brain, eyes, and pharyngeal arches. More caudally, expression persists in the pectoral fin buds, the spinal cord and, for the first time, appears in the intestine. At 72 hpf, expressed only in restricted regions of the brain, in pharyngeal arches region and in the amacrine cells and the horizontal cells of the retina.

The protein localises to the nucleus. The protein is Prothymosin alpha-B of Danio rerio (Zebrafish).